The chain runs to 205 residues: MKLRGLYAITDSQLLSGKFLSYVEAALDGGVTLLQYRDKNSDESRRLREATELLKLCERYKTRLIINDDAELAARLGVGVHLGQSDGSLPDARALLGHKAIVGATCHGRVELAEQAKADGATYVAFGRFFNSLTKPGAPAVPLDLIAQVRARVHLPIAVIGGITLENAPQLVEHGADLLAVVHGLFGAENTQEVTRRAKAFTALL.

4-amino-2-methyl-5-(diphosphooxymethyl)pyrimidine is bound by residues 35-39 and Asn-67; that span reads QYRDK. Mg(2+) is bound by residues Asp-68 and Asp-86. Thr-105 provides a ligand contact to 4-amino-2-methyl-5-(diphosphooxymethyl)pyrimidine. A 2-[(2R,5Z)-2-carboxy-4-methylthiazol-5(2H)-ylidene]ethyl phosphate-binding site is contributed by 132–134; sequence SLT. 4-amino-2-methyl-5-(diphosphooxymethyl)pyrimidine is bound at residue Lys-135. Gly-162 provides a ligand contact to 2-[(2R,5Z)-2-carboxy-4-methylthiazol-5(2H)-ylidene]ethyl phosphate.

It belongs to the thiamine-phosphate synthase family. Mg(2+) serves as cofactor.

It catalyses the reaction 2-[(2R,5Z)-2-carboxy-4-methylthiazol-5(2H)-ylidene]ethyl phosphate + 4-amino-2-methyl-5-(diphosphooxymethyl)pyrimidine + 2 H(+) = thiamine phosphate + CO2 + diphosphate. The catalysed reaction is 2-(2-carboxy-4-methylthiazol-5-yl)ethyl phosphate + 4-amino-2-methyl-5-(diphosphooxymethyl)pyrimidine + 2 H(+) = thiamine phosphate + CO2 + diphosphate. The enzyme catalyses 4-methyl-5-(2-phosphooxyethyl)-thiazole + 4-amino-2-methyl-5-(diphosphooxymethyl)pyrimidine + H(+) = thiamine phosphate + diphosphate. The protein operates within cofactor biosynthesis; thiamine diphosphate biosynthesis; thiamine phosphate from 4-amino-2-methyl-5-diphosphomethylpyrimidine and 4-methyl-5-(2-phosphoethyl)-thiazole: step 1/1. Its function is as follows. Condenses 4-methyl-5-(beta-hydroxyethyl)thiazole monophosphate (THZ-P) and 2-methyl-4-amino-5-hydroxymethyl pyrimidine pyrophosphate (HMP-PP) to form thiamine monophosphate (TMP). The protein is Thiamine-phosphate synthase of Pseudomonas syringae pv. syringae (strain B728a).